Consider the following 224-residue polypeptide: N6-methyladenosine RNA demethylase ALKBH (224 aa).

The region spanning 93 to 222 (LAQAAIVNFY…RINLNVRQMR (130 aa)) is the Fe2OG dioxygenase domain. Fe cation is bound by residues His111, Asp113, and His178. Residue Arg213 participates in 2-oxoglutarate binding.

The protein belongs to the alkB family. The cofactor is Fe(2+).

It carries out the reaction an N(6)-methyladenosine in mRNA + 2-oxoglutarate + O2 = an adenosine in mRNA + formaldehyde + succinate + CO2. In terms of biological role, RNA demethylase that regulates the stability of mRNAs through an m(6)A-dependent manner. M6A is a modification present at internal sites of mRNAs and some non-coding RNAs and plays a role in mRNA stability and processing. Demethylate m6A at position A1935 within the 3'UTR of transcription factor ZAP1 and plays an important role in C.parasitica development and virulence. Target mRNAs are primarily associated with amino-acid biosynthesis, 2-oxocarboxylic acid metabolism, and ABC transporters, as well as alpha-amino acid metabolism, small-molecule biosynthesis, and the sulfite reductase complex (NADPH). This is N6-methyladenosine RNA demethylase ALKBH from Cryphonectria parasitica (strain ATCC 38755 / EP155).